Reading from the N-terminus, the 809-residue chain is Protein TRC8 homolog (809 aa).

11 helical membrane-spanning segments follow: residues 124 to 144 (TVKFVLCVFAFLSAACIFMLW), 147 to 167 (HLVMVYMFLTSLGLTFLSYWS), 200 to 220 (VMSLAPHLMAQWFMGMLFAYI), 233 to 253 (MPIIFASPILLAMLPLPAKVV), 256 to 276 (LPVVAVFTPIILTKITLMQSA), 350 to 370 (LVDGCETMTAVLGMTGVISMF), 392 to 412 (LGTVSAVLFYILALQTGLTSL), 425 to 445 (LCLLMTALLHFLHNIVSPILM), 461 to 481 (ALSVCAFLVVLSVSLLYHLWS), 488 to 508 (WLLAVTAFSVEVVVKVLVSLA), and 539 to 559 (SVEFCFGILLFINGAWILIFE). The RING-type; atypical zinc-finger motif lies at 621 to 659 (CAICYQEMYSAKITRCRHFFHGVCLRKWLYVQDRCPLCH). Disordered regions lie at residues 696–724 (NNAAAQRRSPERAPVEASEQAPATSSSSA) and 752–788 (VASSSSATHRISASGSSDSSYMTASAQSPPPTATSAA). Positions 711-724 (EASEQAPATSSSSA) are enriched in low complexity.

Interacts with VHL. Interacts with the MPN domain of CSN5. Interacts with EIF3F and EIF3H.

The protein localises to the endoplasmic reticulum membrane. Functionally, plays a role in growth inhibition that is dependent upon COP9 signalosome subunits CSN5 and CSN6. May modulate signalosome levels or compartmentalization. Probably functions in the same or a related pathway to VHL during early midline development. The sequence is that of Protein TRC8 homolog from Drosophila melanogaster (Fruit fly).